The following is a 205-amino-acid chain: Endoribonuclease YbeY (205 aa).

Residues histidine 124, histidine 128, and histidine 134 each contribute to the Zn(2+) site. Residues glycine 162–serine 205 form a disordered region.

It belongs to the endoribonuclease YbeY family. Zn(2+) is required as a cofactor.

Its subcellular location is the cytoplasm. Its function is as follows. Single strand-specific metallo-endoribonuclease involved in late-stage 70S ribosome quality control and in maturation of the 3' terminus of the 16S rRNA. The polypeptide is Endoribonuclease YbeY (Beijerinckia indica subsp. indica (strain ATCC 9039 / DSM 1715 / NCIMB 8712)).